A 566-amino-acid chain; its full sequence is Urease subunit beta (566 aa).

A Urease domain is found at 129-566 (GGIDTHIHFI…VPMARRYFMF (438 aa)). Ni(2+)-binding residues include H134, H136, and K217. Residue K217 is modified to N6-carboxylysine. Position 219 (H219) interacts with substrate. Ni(2+) contacts are provided by H246 and H272. H320 functions as the Proton donor in the catalytic mechanism. Residue D360 coordinates Ni(2+).

It belongs to the metallo-dependent hydrolases superfamily. Urease alpha subunit family. In terms of assembly, heterohexamer of 3 UreA (alpha) and 3 UreB (beta) subunits. Ni cation is required as a cofactor. In terms of processing, carboxylation allows a single lysine to coordinate two nickel ions.

It is found in the cytoplasm. The catalysed reaction is urea + 2 H2O + H(+) = hydrogencarbonate + 2 NH4(+). It functions in the pathway nitrogen metabolism; urea degradation; CO(2) and NH(3) from urea (urease route): step 1/1. The chain is Urease subunit beta from Aliarcobacter butzleri (strain RM4018) (Arcobacter butzleri).